The following is an 84-amino-acid chain: MSGGSTGERPFSDIITSIRYWIIHSITIPSLFVAGFLFVSTGLAYDAFGTPRPNEYFTQDRQQIPLVNDRFSAKQELEDLTKGL.

The chain crosses the membrane as a helical span at residues 22-36 (IIHSITIPSLFVAGF). His24 is a binding site for heme.

The protein belongs to the PsbE/PsbF family. As to quaternary structure, heterodimer of an alpha subunit and a beta subunit. PSII is composed of 1 copy each of membrane proteins PsbA, PsbB, PsbC, PsbD, PsbE, PsbF, PsbH, PsbI, PsbJ, PsbK, PsbL, PsbM, PsbT, PsbX, PsbY, PsbZ, Psb30/Ycf12, at least 3 peripheral proteins of the oxygen-evolving complex and a large number of cofactors. It forms dimeric complexes. Requires heme b as cofactor.

Its subcellular location is the plastid. It localises to the chloroplast thylakoid membrane. Its function is as follows. This b-type cytochrome is tightly associated with the reaction center of photosystem II (PSII). PSII is a light-driven water:plastoquinone oxidoreductase that uses light energy to abstract electrons from H(2)O, generating O(2) and a proton gradient subsequently used for ATP formation. It consists of a core antenna complex that captures photons, and an electron transfer chain that converts photonic excitation into a charge separation. This chain is Cytochrome b559 subunit alpha, found in Emiliania huxleyi (Coccolithophore).